The following is a 54-amino-acid chain: MSSGQNSGGLMSSAGLVRYFDAEDRNSIRIDPKTIVAFGVLFGVGVLVLNALAI.

The Cytoplasmic portion of the chain corresponds to 1-31 (MSSGQNSGGLMSSAGLVRYFDAEDRNSIRID). A helical membrane pass occupies residues 32-53 (PKTIVAFGVLFGVGVLVLNALA). Residue I54 is a topological domain, extracellular.

Belongs to the SEC61-beta family. In terms of assembly, component of the protein translocase complex. Heterotrimer consisting of alpha (SecY), beta (SecG) and gamma (SecE) subunits. Can form oligomers of the heterotrimer.

The protein localises to the cell membrane. Functionally, involved in protein export. The function of the beta subunit is unknown, but it may be involved in stabilization of the trimeric complex. This Haloquadratum walsbyi (strain DSM 16790 / HBSQ001) protein is Preprotein translocase subunit SecG.